The following is a 329-amino-acid chain: Fructose-1,6-bisphosphatase class 1 (329 aa).

Residues Glu-84, Asp-103, Leu-105, and Asp-106 each coordinate Mg(2+). Substrate contacts are provided by residues 106 to 109, Asn-196, and Lys-262; that span reads DGSS. Glu-268 lines the Mg(2+) pocket.

The protein belongs to the FBPase class 1 family. In terms of assembly, homotetramer. Requires Mg(2+) as cofactor.

It localises to the cytoplasm. It catalyses the reaction beta-D-fructose 1,6-bisphosphate + H2O = beta-D-fructose 6-phosphate + phosphate. It functions in the pathway carbohydrate biosynthesis; gluconeogenesis. The chain is Fructose-1,6-bisphosphatase class 1 from Shewanella pealeana (strain ATCC 700345 / ANG-SQ1).